We begin with the raw amino-acid sequence, 400 residues long: Probable vacuolar protease A (400 aa).

The signal sequence occupies residues 1 to 18 (MKGSLLLAGATLLGCTSA). Residues 19–72 (KLHSLKLKKVSLKEQLEHADIDVQIKSLGQKYMGIRPEQHEQQMFKEQTPIEAE) constitute a propeptide, activation peptide. The Peptidase A1 domain occupies 87-397 (YFSEISIGTP…DLGKGTVGLA (311 aa)). Asp-105 is an active-site residue. A disulfide bridge links Cys-118 with Cys-123. Asn-140 is a glycosylation site (N-linked (GlcNAc...) asparagine). Asp-289 is an active-site residue. Residues Cys-323 and Cys-356 are joined by a disulfide bond. Asn-340 is a glycosylation site (N-linked (GlcNAc...) asparagine).

The protein belongs to the peptidase A1 family.

It localises to the vacuole lumen. The protein resides in the secreted. The catalysed reaction is Hydrolysis of proteins with broad specificity for peptide bonds. Cleaves -Leu-Leu-|-Val-Tyr- bond in a synthetic substrate. Does not act on esters of Tyr or Arg.. In terms of biological role, vacuolar aspartic endopeptidase which is probably also secreted and contributes to virulence. In Trichophyton verrucosum (strain HKI 0517), this protein is Probable vacuolar protease A (PEP2).